A 185-amino-acid chain; its full sequence is Thymidine kinase (185 aa).

ATP is bound by residues 10-17 and 83-86; these read GPMYSGKT and DEVQ. Glutamate 84 acts as the Proton acceptor in catalysis. Cysteine 140, cysteine 143, cysteine 173, and cysteine 176 together coordinate Zn(2+).

Belongs to the thymidine kinase family. In terms of assembly, homotetramer.

The protein resides in the cytoplasm. It carries out the reaction thymidine + ATP = dTMP + ADP + H(+). The protein is Thymidine kinase of Pseudothermotoga lettingae (strain ATCC BAA-301 / DSM 14385 / NBRC 107922 / TMO) (Thermotoga lettingae).